Here is an 833-residue protein sequence, read N- to C-terminus: Kinesin-like protein KIFC3 (833 aa).

Residues 19–74 (LWRVGRAPEPEPGMARPAPAPASPAARPFPHTGPGRLRTGRGKDTPVCGDEDSSAR) are disordered. Low complexity predominate over residues 30-48 (PGMARPAPAPASPAARPFP). Coiled coils occupy residues 102 to 362 (LTLQ…ENLA) and 395 to 432 (LLQE…LQLR). Residues 445-768 (NIRVIARVRP…LKFAERVRSV (324 aa)) form the Kinesin motor domain. 528 to 535 (GQTGAGKT) contributes to the ATP binding site. The interval 786–833 (EHLEWEPACQTPQPSARAHSAPSSGTSSRPGSIRRKLQPSGKSRPLPV) is disordered. A compositionally biased stretch (polar residues) spans 806 to 815 (APSSGTSSRP). A phosphoserine mark is found at S813 and S817.

This sequence belongs to the TRAFAC class myosin-kinesin ATPase superfamily. Kinesin family.

It is found in the cell junction. It localises to the adherens junction. The protein resides in the cytoplasm. The protein localises to the cytoskeleton. Its subcellular location is the microtubule organizing center. It is found in the centrosome. It localises to the cytoplasmic vesicle membrane. Functionally, minus-end microtubule-dependent motor protein. Involved in apically targeted transport. Required for zonula adherens maintenance. The sequence is that of Kinesin-like protein KIFC3 (KIFC3) from Homo sapiens (Human).